Here is a 656-residue protein sequence, read N- to C-terminus: tRNA 5-methylaminomethyl-2-thiouridine biosynthesis bifunctional protein MnmC (656 aa).

The tRNA (mnm(5)s(2)U34)-methyltransferase stretch occupies residues 1–236; that stretch reads MTDPLIPAVL…KRAMLVGHFA (236 aa). Residues 260-656 are FAD-dependent cmnm(5)s(2)U34 oxidoreductase; it reads IGAGLAGCAV…LRALRQGAVS (397 aa).

The protein in the N-terminal section; belongs to the methyltransferase superfamily. tRNA (mnm(5)s(2)U34)-methyltransferase family. It in the C-terminal section; belongs to the DAO family. It depends on FAD as a cofactor.

It is found in the cytoplasm. The enzyme catalyses 5-aminomethyl-2-thiouridine(34) in tRNA + S-adenosyl-L-methionine = 5-methylaminomethyl-2-thiouridine(34) in tRNA + S-adenosyl-L-homocysteine + H(+). Catalyzes the last two steps in the biosynthesis of 5-methylaminomethyl-2-thiouridine (mnm(5)s(2)U) at the wobble position (U34) in tRNA. Catalyzes the FAD-dependent demodification of cmnm(5)s(2)U34 to nm(5)s(2)U34, followed by the transfer of a methyl group from S-adenosyl-L-methionine to nm(5)s(2)U34, to form mnm(5)s(2)U34. In Paraburkholderia phytofirmans (strain DSM 17436 / LMG 22146 / PsJN) (Burkholderia phytofirmans), this protein is tRNA 5-methylaminomethyl-2-thiouridine biosynthesis bifunctional protein MnmC.